The following is a 104-amino-acid chain: MAKFDPRNLPDLVRRPILTEKATIMMEQNKYTFEVTPKASKPQIRAAIEDLFQVKVVKVNTALPPRRKKRVGKFIGFKPQYKKAIVTIAPGDVDKIRQVLFPEV.

The protein belongs to the universal ribosomal protein uL23 family. Part of the 50S ribosomal subunit. Contacts protein L29, and trigger factor when it is bound to the ribosome.

One of the early assembly proteins it binds 23S rRNA. One of the proteins that surrounds the polypeptide exit tunnel on the outside of the ribosome. Forms the main docking site for trigger factor binding to the ribosome. The sequence is that of Large ribosomal subunit protein uL23 from Nostoc sp. (strain PCC 7120 / SAG 25.82 / UTEX 2576).